The primary structure comprises 400 residues: Elongation factor Tu (400 aa).

The region spanning 10-210 is the tr-type G domain; it reads KPHCNVGTIG…VDTYIPIPPR (201 aa). Residues 19-26 form a G1 region; it reads GHVDHGKT. Residue 19–26 coordinates GTP; it reads GHVDHGKT. Threonine 26 is a binding site for Mg(2+). The segment at 60–64 is G2; the sequence is GLTIA. The tract at residues 81–84 is G3; sequence DCPG. Residues 81–85 and 136–139 each bind GTP; these read DCPGH and NKCD. Positions 136–139 are G4; it reads NKCD. The G5 stretch occupies residues 174 to 176; the sequence is SAI.

This sequence belongs to the TRAFAC class translation factor GTPase superfamily. Classic translation factor GTPase family. EF-Tu/EF-1A subfamily. In terms of assembly, monomer.

It is found in the cytoplasm. The catalysed reaction is GTP + H2O = GDP + phosphate + H(+). Functionally, GTP hydrolase that promotes the GTP-dependent binding of aminoacyl-tRNA to the A-site of ribosomes during protein biosynthesis. This chain is Elongation factor Tu, found in Dehalococcoides mccartyi (strain CBDB1).